The chain runs to 477 residues: MHQLIRKFVFTESHCLEEEDNTKSFAELFEKLDVNKDGKVDVSELKTGLAAMGFSMGKGEAQKIVTSGDTDKDEGLDFEEFSKYLKEHEKKLRLTFKSLDKNEDGRVDAKEIQQSLKDLGINLSDKDAEKILHSIDVDGTMTLDWNEWREHFLFNPAEDLQQIIRYWKKSTVLDIGDSLTIPDEFTEEEKTTGMWWKQLAAGGVAGAVSRTGTAPLDRMKVFMQVHSSKTNKISLVNGFKQMIKEGGVASLWRGNGVNVIKIAPETAIKFMAYEQYKKLLSKDGGKVQSHERFMAGSLAGATAQTAIYPMEVMKTRLTLRKTGQYSGMFDCAKKILRKEGVKAFYKGYVPNILGIIPYAGIDLAVYETLKNTWLSHYAKDTANPGVLVLLGCGTISSTCGQLASYPLALIRTRMQAMASMEGSEQVSMSKLVKKIMQKEGFFGLYRGILPNFMKVIPAVSISYVVYEYMRSGLGISK.

The interval 1–174 is regulatory N-terminal domain; it reads MHQLIRKFVF…RYWKKSTVLD (174 aa). Over 1-198 the chain is Mitochondrial intermembrane; the sequence is MHQLIRKFVF…EKTTGMWWKQ (198 aa). One can recognise an EF-hand 1 domain in the interval 20–55; the sequence is DNTKSFAELFEKLDVNKDGKVDVSELKTGLAAMGFS. Residues Asp33, Asn35, Asp37, Lys39, Glu44, Asp69, Asp71, Asp73, Glu80, Asp100, Asn102, Asp104, Arg106, Glu111, Asp136, Asp138, Thr140, Thr142, and Glu147 each contribute to the Ca(2+) site. 2 EF-hand domains span residues 87 to 122 and 123 to 158; these read EHEKKLRLTFKSLDKNEDGRVDAKEIQQSLKDLGIN and LSDKDAEKILHSIDVDGTMTLDWNEWREHFLFNPAE. Positions 160 to 169 are linker region; that stretch reads LQQIIRYWKK. The segment at 175–477 is C-terminal transmembrane transporter domain; that stretch reads IGDSLTIPDE…YMRSGLGISK (303 aa). Solcar repeat units follow at residues 193–279, 287–372, and 384–472; these read GMWW…YKKL, VQSH…LKNT, and PGVL…MRSG. Residues 199 to 216 form a helical membrane-spanning segment; the sequence is LAAGGVAGAVSRTGTAPL. The Mitochondrial matrix portion of the chain corresponds to 217–253; the sequence is DRMKVFMQVHSSKTNKISLVNGFKQMIKEGGVASLWR. A helical transmembrane segment spans residues 254 to 273; sequence GNGVNVIKIAPETAIKFMAY. Residues 274-296 lie on the Mitochondrial intermembrane side of the membrane; the sequence is EQYKKLLSKDGGKVQSHERFMAG. Residues 297 to 310 form a helical membrane-spanning segment; it reads SLAGATAQTAIYPM. The Mitochondrial matrix segment spans residues 311 to 346; it reads EVMKTRLTLRKTGQYSGMFDCAKKILRKEGVKAFYK. The helical transmembrane segment at 347–366 threads the bilayer; sequence GYVPNILGIIPYAGIDLAVY. The Mitochondrial intermembrane segment spans residues 367 to 389; it reads ETLKNTWLSHYAKDTANPGVLVL. A helical transmembrane segment spans residues 390–407; it reads LGCGTISSTCGQLASYPL. Residues 408-446 lie on the Mitochondrial matrix side of the membrane; it reads ALIRTRMQAMASMEGSEQVSMSKLVKKIMQKEGFFGLYR. The helical transmembrane segment at 447-466 threads the bilayer; the sequence is GILPNFMKVIPAVSISYVVY. Over 467-477 the chain is Mitochondrial intermembrane; sequence EYMRSGLGISK.

This sequence belongs to the mitochondrial carrier (TC 2.A.29) family. Monomer.

It is found in the mitochondrion inner membrane. The catalysed reaction is Mg(2+)(out) + phosphate(in) + ATP(out) = Mg(2+)(in) + phosphate(out) + ATP(in). The enzyme catalyses ADP(out) + phosphate(in) + H(+)(out) = ADP(in) + phosphate(out) + H(+)(in). It catalyses the reaction AMP(out) + phosphate(in) = AMP(in) + phosphate(out). It carries out the reaction phosphate(in) + ATP(out) + 2 H(+)(out) = phosphate(out) + ATP(in) + 2 H(+)(in). The catalysed reaction is dADP(in) + ADP(out) = dADP(out) + ADP(in). The enzyme catalyses Mg(2+)(in) + ADP(out) + ATP(in) + H(+)(out) = Mg(2+)(out) + ADP(in) + ATP(out) + H(+)(in). It catalyses the reaction ADP(out) + diphosphate(in) = ADP(in) + diphosphate(out). It carries out the reaction dAMP(in) + ADP(out) + H(+)(out) = dAMP(out) + ADP(in) + H(+)(in). The catalysed reaction is 3'-AMP(in) + ADP(out) + H(+)(out) = 3'-AMP(out) + ADP(in) + H(+)(in). The enzyme catalyses dAMP(out) + phosphate(in) = dAMP(in) + phosphate(out). It catalyses the reaction 3'-AMP(out) + phosphate(in) = 3'-AMP(in) + phosphate(out). It carries out the reaction dADP(out) + phosphate(in) + H(+)(out) = dADP(in) + phosphate(out) + H(+)(in). Its activity is regulated as follows. Activated by an increase in cytosolic calcium levels that induce a conformational change of the N-terminal regulatory domain, uncapping the channel and allowing transport. Inhibited by bathophenanthroline, mersalyl, p-hydroxymercuribenzoate, bromcresol purple and tannic acid. Electroneutral antiporter that mediates the transport of adenyl nucleotides through the inner mitochondrial membrane. Originally identified as an ATP-magnesium/inorganic phosphate antiporter, it also acts as a broad specificity adenyl nucleotide antiporter. By regulating the mitochondrial matrix adenyl nucleotide pool could adapt to changing cellular energetic demands and indirectly regulate adenyl nucleotide-dependent metabolic pathways. The protein is Mitochondrial adenyl nucleotide antiporter SLC25A24 (slc25a24) of Danio rerio (Zebrafish).